The chain runs to 389 residues: MALVQPHGGKLTPVLAPKEQRAELKAKAEKLPVIRMSSRESSDCLMLGMGAFSPLTGFMTQADYQGVIDNMHLASGLAWPLPVTLAVTKDQAASIEVGQELALVDDETDIYVGIIKVADKYEYDKVKECKATFFTDDADHPGVQKVMSQGEVYLGGDIVTFSEMGYATKYAGYYAHPAETRALFESKGWSTVCAFQTRNPLHRSHEFLCKIGNEVCDGLFLHPIVGKLKKGDIPAEVRFECYKAHMENYFNPATIEMRVYPMEMRYAGPKEAILHAIFRQNFGCSHILVGRDHAGVGSYYTAYQAQEIFDEFKPGEILCQPIKVTASYYCKKCMGMATEKTCPHTKEDRIAISGTKVREMFSKGELPPLEFGRKEVLEILTKYYQSLEK.

This sequence belongs to the sulfate adenylyltransferase family.

It carries out the reaction sulfate + ATP + H(+) = adenosine 5'-phosphosulfate + diphosphate. The protein operates within sulfur metabolism; hydrogen sulfide biosynthesis; sulfite from sulfate: step 1/3. In Desulforamulus reducens (strain ATCC BAA-1160 / DSM 100696 / MI-1) (Desulfotomaculum reducens), this protein is Sulfate adenylyltransferase.